The chain runs to 872 residues: Alanine--tRNA ligase (872 aa).

H566, H570, C668, and H672 together coordinate Zn(2+).

Belongs to the class-II aminoacyl-tRNA synthetase family. The cofactor is Zn(2+).

It is found in the cytoplasm. The catalysed reaction is tRNA(Ala) + L-alanine + ATP = L-alanyl-tRNA(Ala) + AMP + diphosphate. Functionally, catalyzes the attachment of alanine to tRNA(Ala) in a two-step reaction: alanine is first activated by ATP to form Ala-AMP and then transferred to the acceptor end of tRNA(Ala). Also edits incorrectly charged Ser-tRNA(Ala) and Gly-tRNA(Ala) via its editing domain. This is Alanine--tRNA ligase from Lactococcus lactis subsp. cremoris (strain SK11).